Consider the following 207-residue polypeptide: Putative threonylcarbamoyl-AMP synthase (207 aa).

Residues 15–199 form the YrdC-like domain; sequence EEERKKVLEF…KIISIREGVI (185 aa).

Belongs to the SUA5 family.

Its subcellular location is the cytoplasm. It carries out the reaction L-threonine + hydrogencarbonate + ATP = L-threonylcarbamoyladenylate + diphosphate + H2O. Required for the formation of a threonylcarbamoyl group on adenosine at position 37 (t(6)A37) in tRNAs that read codons beginning with adenine. Catalyzes the conversion of L-threonine, HCO(3)(-)/CO(2) and ATP to give threonylcarbamoyl-AMP (TC-AMP) as the acyladenylate intermediate, with the release of diphosphate. This Methanocaldococcus jannaschii (strain ATCC 43067 / DSM 2661 / JAL-1 / JCM 10045 / NBRC 100440) (Methanococcus jannaschii) protein is Putative threonylcarbamoyl-AMP synthase.